The following is a 191-amino-acid chain: Peptidyl-tRNA hydrolase (191 aa).

Position 17 (Y17) interacts with tRNA. H22 functions as the Proton acceptor in the catalytic mechanism. Y68, N70, and N116 together coordinate tRNA.

This sequence belongs to the PTH family. In terms of assembly, monomer.

It localises to the cytoplasm. The catalysed reaction is an N-acyl-L-alpha-aminoacyl-tRNA + H2O = an N-acyl-L-amino acid + a tRNA + H(+). In terms of biological role, hydrolyzes ribosome-free peptidyl-tRNAs (with 1 or more amino acids incorporated), which drop off the ribosome during protein synthesis, or as a result of ribosome stalling. Catalyzes the release of premature peptidyl moieties from peptidyl-tRNA molecules trapped in stalled 50S ribosomal subunits, and thus maintains levels of free tRNAs and 50S ribosomes. The chain is Peptidyl-tRNA hydrolase from Mycobacterium avium (strain 104).